A 59-amino-acid polypeptide reads, in one-letter code: Large ribosomal subunit protein uL30 (59 aa).

It belongs to the universal ribosomal protein uL30 family. Part of the 50S ribosomal subunit.

The protein is Large ribosomal subunit protein uL30 of Haemophilus influenzae (strain 86-028NP).